We begin with the raw amino-acid sequence, 245 residues long: tRNA pseudouridine synthase A (245 aa).

The Nucleophile role is filled by D52. Residue Y111 participates in substrate binding.

It belongs to the tRNA pseudouridine synthase TruA family. As to quaternary structure, homodimer.

The catalysed reaction is uridine(38/39/40) in tRNA = pseudouridine(38/39/40) in tRNA. In terms of biological role, formation of pseudouridine at positions 38, 39 and 40 in the anticodon stem and loop of transfer RNAs. This Thermotoga petrophila (strain ATCC BAA-488 / DSM 13995 / JCM 10881 / RKU-1) protein is tRNA pseudouridine synthase A.